The chain runs to 264 residues: Apolipoprotein A-I (264 aa).

Positions 1–18 are cleaved as a signal peptide; it reads MKAVVLALAVLFLTGSQA. 2 tandem repeats follow at residues 67–88 and 89–110. Residues 67–264 are 10 X approximate tandem repeats; the sequence is LHLLDNWDTL…DEASKKLNAQ (198 aa). M109 is subject to Methionine sulfoxide. The stretch at 111-121 is one 3; half-length repeat; sequence KDLEEVKVKVQ. 5 consecutive repeat copies span residues 122–143, 144–165, 166–187, 188–207, and 208–229. The 9; half-length repeat unit spans residues 230-240; the sequence is PALEDLRQGLM. The stretch at 241–264 is repeat 10; it reads PVLENLKTTVLAAIDEASKKLNAQ.

The protein belongs to the apolipoprotein A1/A4/E family. In terms of assembly, homodimer. Interacts with APOA1BP and CLU. Component of a sperm activating protein complex (SPAP), consisting of APOA1, an immunoglobulin heavy chain, an immunoglobulin light chain and albumin. Interacts with NDRG1. Interacts with SCGB3A2. Interacts with NAXE and YJEFN3. Glycosylated. Post-translationally, palmitoylated. In terms of processing, phosphorylation sites are present in the extracellular medium.

The protein localises to the secreted. Functionally, participates in the reverse transport of cholesterol from tissues to the liver for excretion by promoting cholesterol efflux from tissues and by acting as a cofactor for the lecithin cholesterol acyltransferase (LCAT). As part of the SPAP complex, activates spermatozoa motility. The polypeptide is Apolipoprotein A-I (APOA1) (Jaculus jaculus (Lesser Egyptian jerboa)).